The primary structure comprises 597 residues: Gamma-terpinene synthase, chloroplastic (597 aa).

The transit peptide at 1-47 directs the protein to the chloroplast; it reads MATLSMQVSILNKQLKNLNSFGMRASKLPLVARRVDVSTTRLRPICS. 2 residues coordinate Mn(2+): D350 and D354. Residues 350-354 carry the DDXXD motif motif; sequence DDVYD. Homodimerization stretches follow at residues 356–362 and 428–464; these read YGTLDEL and EAKW…YFTL. Positions 494 and 502 each coordinate Mn(2+).

Belongs to the terpene synthase family. Homodimer. The cofactor is Mn(2+). Requires Mg(2+) as cofactor.

The protein localises to the plastid. It is found in the chloroplast. It carries out the reaction (2E)-geranyl diphosphate = gamma-terpinene + diphosphate. It participates in secondary metabolite biosynthesis; terpenoid biosynthesis. In terms of biological role, involved in the biosynthesis of phenolic monoterpenes natural products thymol and carvacrol which have a broad range of biological activities acting as antimicrobial compounds, insecticides, antioxidants and pharmaceutical agents. Monoterpene synthase which catalyzes the conversion of geranyl diphosphate (GPP) to gamma-terpinene and minor amounts of other monoterpenes (e.g. alpha-thujene, alpha-terpinene, myrcene, sabinene, (+)-R-limonene, alpha-pinene and alpha-phellandrene). This Thymus caespititius (Cretan thyme) protein is Gamma-terpinene synthase, chloroplastic.